A 188-amino-acid polypeptide reads, in one-letter code: Probable nicotinate-nucleotide adenylyltransferase (188 aa).

The protein belongs to the NadD family.

It catalyses the reaction nicotinate beta-D-ribonucleotide + ATP + H(+) = deamido-NAD(+) + diphosphate. The protein operates within cofactor biosynthesis; NAD(+) biosynthesis; deamido-NAD(+) from nicotinate D-ribonucleotide: step 1/1. Functionally, catalyzes the reversible adenylation of nicotinate mononucleotide (NaMN) to nicotinic acid adenine dinucleotide (NaAD). The chain is Probable nicotinate-nucleotide adenylyltransferase from Listeria innocua serovar 6a (strain ATCC BAA-680 / CLIP 11262).